We begin with the raw amino-acid sequence, 441 residues long: RNA-binding protein BRN1 (441 aa).

RRM domains lie at 18–99 (VKLF…YADG) and 106–186 (HKLF…WADT). Positions 258–273 (QPNQGNNNALQGTSPD) are enriched in polar residues. Residues 258–282 (QPNQGNNNALQGTSPDSVPPRLARR) form a disordered region. In terms of domain architecture, RRM 3 spans 349–427 (ANLFIYNIPR…KKLKVQLKRD (79 aa)).

As to expression, highly expressed in stems and cauline leaves, and at lower levels in siliques, flowers, roots and rosette leaves.

The protein resides in the cytoplasm. RNA-binding protein involved in the regulation of flowering time. Acts as a repressor of the activity of SOC1, a transcriptional activator of flowering time. Binds to the 3'-UTR of SOC1 mRNA in the cytoplasm and participates in SOC1 mRNA decay, mediated by the distal region of the SOC1 3'-UTR. Acts as a positive regulator of salicylic acid (SA)-mediated immunity. May act on SA signaling-related genes at a post-transcriptional level. This is RNA-binding protein BRN1 from Arabidopsis thaliana (Mouse-ear cress).